Here is a 1124-residue protein sequence, read N- to C-terminus: PAN2-PAN3 deadenylation complex catalytic subunit PAN2 (1124 aa).

WD repeat units lie at residues 19-58, 118-157, 158-195, and 309-348; these read IDNS…IPMP, PGFN…TTSF, NHTG…TVKS, and SSNT…SKNF. The interval 351–484 is linker; that stretch reads FPSYLEQPDF…EYKLSNKFEV (134 aa). Residues 484–861 form the USP domain; that stretch reads VPNCYSNLKI…KPIIVMYQLA (378 aa). The 175-residue stretch at 917–1091 folds into the Exonuclease domain; that stretch reads IAIDAEFVAL…EDANTALLLY (175 aa). 4 residues coordinate a divalent metal cation: Asp920, Glu922, Asp1030, and Asp1083.

It belongs to the peptidase C19 family. PAN2 subfamily. In terms of assembly, forms a heterotrimer with an asymmetric homodimer of the regulatory subunit PAN3 to form the poly(A)-nuclease (PAN) deadenylation complex. The cofactor is a divalent metal cation.

Its subcellular location is the cytoplasm. The enzyme catalyses Exonucleolytic cleavage of poly(A) to 5'-AMP.. Its activity is regulated as follows. Positively regulated by the regulatory subunit PAN3. Catalytic subunit of the poly(A)-nuclease (PAN) deadenylation complex, one of two cytoplasmic mRNA deadenylases involved in mRNA turnover. PAN specifically shortens poly(A) tails of RNA and the activity is stimulated by poly(A)-binding protein PAB1. PAN deadenylation is followed by rapid degradation of the shortened mRNA tails by the CCR4-NOT complex. Deadenylated mRNAs are then degraded by two alternative mechanisms, namely exosome-mediated 3'-5' exonucleolytic degradation, or deadenylation-dependent mRNA decaping and subsequent 5'-3' exonucleolytic degradation by XRN1. May also be involved in post-transcriptional maturation of mRNA poly(A) tails. This chain is PAN2-PAN3 deadenylation complex catalytic subunit PAN2, found in Debaryomyces hansenii (strain ATCC 36239 / CBS 767 / BCRC 21394 / JCM 1990 / NBRC 0083 / IGC 2968) (Yeast).